A 154-amino-acid chain; its full sequence is Deoxyuridine 5'-triphosphate nucleotidohydrolase (154 aa).

Substrate is bound by residues arginine 68 to glycine 70, asparagine 81, and threonine 85 to aspartate 87.

It belongs to the dUTPase family. Requires Mg(2+) as cofactor.

The enzyme catalyses dUTP + H2O = dUMP + diphosphate + H(+). It participates in pyrimidine metabolism; dUMP biosynthesis; dUMP from dCTP (dUTP route): step 2/2. Its function is as follows. This enzyme is involved in nucleotide metabolism: it produces dUMP, the immediate precursor of thymidine nucleotides and it decreases the intracellular concentration of dUTP so that uracil cannot be incorporated into DNA. In Acidiphilium cryptum (strain JF-5), this protein is Deoxyuridine 5'-triphosphate nucleotidohydrolase.